The chain runs to 161 residues: Ribonuclease P protein component 2 (161 aa).

It belongs to the eukaryotic/archaeal RNase P protein component 2 family. In terms of assembly, consists of a catalytic RNA component and at least 4-5 protein subunits.

The protein localises to the cytoplasm. It carries out the reaction Endonucleolytic cleavage of RNA, removing 5'-extranucleotides from tRNA precursor.. Part of ribonuclease P, a protein complex that generates mature tRNA molecules by cleaving their 5'-ends. The protein is Ribonuclease P protein component 2 of Natronomonas pharaonis (strain ATCC 35678 / DSM 2160 / CIP 103997 / JCM 8858 / NBRC 14720 / NCIMB 2260 / Gabara) (Halobacterium pharaonis).